A 386-amino-acid chain; its full sequence is Succinate--CoA ligase [ADP-forming] subunit beta (386 aa).

An ATP-grasp domain is found at 9 to 244; the sequence is KEILRNFGVP…LDEEDPAEVE (236 aa). ATP is bound by residues K46, 53–55, E99, A102, and E107; that span reads GRG. Mg(2+) is bound by residues N199 and D213. Residues N264 and 321–323 contribute to the substrate site; that span reads GIM.

This sequence belongs to the succinate/malate CoA ligase beta subunit family. As to quaternary structure, heterotetramer of two alpha and two beta subunits. It depends on Mg(2+) as a cofactor.

It catalyses the reaction succinate + ATP + CoA = succinyl-CoA + ADP + phosphate. The enzyme catalyses GTP + succinate + CoA = succinyl-CoA + GDP + phosphate. Its pathway is carbohydrate metabolism; tricarboxylic acid cycle; succinate from succinyl-CoA (ligase route): step 1/1. Functionally, succinyl-CoA synthetase functions in the citric acid cycle (TCA), coupling the hydrolysis of succinyl-CoA to the synthesis of either ATP or GTP and thus represents the only step of substrate-level phosphorylation in the TCA. The beta subunit provides nucleotide specificity of the enzyme and binds the substrate succinate, while the binding sites for coenzyme A and phosphate are found in the alpha subunit. The polypeptide is Succinate--CoA ligase [ADP-forming] subunit beta (Polaromonas sp. (strain JS666 / ATCC BAA-500)).